A 238-amino-acid chain; its full sequence is Dolichyldiphosphatase 1 (238 aa).

A run of 4 helical transmembrane segments spans residues 33-53 (LAYLSLSPVVIIVGFVTLIIF), 100-120 (PSSHSQFMWFFSVYSFLFLYL), 130-150 (FLDLLWRHVLSLGLLTAAFLV), and 162-182 (WSQVLYGGVAGSLMAIAWFAF).

The protein belongs to the dolichyldiphosphatase family.

It is found in the endoplasmic reticulum membrane. It carries out the reaction a di-trans,poly-cis-dolichyl diphosphate + H2O = a di-trans,poly-cis-dolichyl phosphate + phosphate + H(+). Its pathway is protein modification; protein glycosylation. Functionally, required for efficient N-glycosylation. Necessary for maintaining optimal levels of dolichol-linked oligosaccharides. Hydrolyzes dolichyl pyrophosphate at a very high rate and dolichyl monophosphate at a much lower rate. Does not act on phosphatidate. This Rhinolophus ferrumequinum (Greater horseshoe bat) protein is Dolichyldiphosphatase 1 (DOLPP1).